The chain runs to 411 residues: Probable protein S-acyltransferase 2 (411 aa).

2 helical membrane passes run 56–76 (LTTA…VFLI) and 85–105 (SLIL…LFLT). The region spanning 160–210 (KFCDTCLLYRPPRASHCSICNNCVQRFDHHCPWVGQCIALRNYPYFICFIS) is the DHHC domain. Residue C190 is the S-palmitoyl cysteine intermediate of the active site. Helical transmembrane passes span 205 to 225 (FICF…FSWV) and 245 to 265 (FVVL…LTVF). S405 carries the phosphoserine modification.

The protein belongs to the DHHC palmitoyltransferase family. In terms of tissue distribution, expressed in flowers and pollen.

The protein localises to the cytoplasmic vesicle membrane. It carries out the reaction L-cysteinyl-[protein] + hexadecanoyl-CoA = S-hexadecanoyl-L-cysteinyl-[protein] + CoA. Functionally, palmitoyl acyltransferase. This Arabidopsis thaliana (Mouse-ear cress) protein is Probable protein S-acyltransferase 2 (PAT02).